The following is a 439-amino-acid chain: MVGWKKKKLCRGHHLWVLGCYMLLAVVSLRLSLRFKCDVDSLDLESRDFQSQHCRDMLYNNLKLPAKRSINCSGITRGDQEAVVQALLDNLEVKKKRPPLTDTYYLNITRDCERFKAQRKFIQFPLSKEELDFPIAYSMVVHEKIENFERLLRAVYAPQNIYCVHVDVKSPETFKEAVKAIISCFPNVFMASKLVPVVYASWSRVQADLNCMEDLLQSSVSWKYLLNTCGTDFPIKTNAEMVLALKMLKGKNSMESEVPSESKKNRWKYHYEVTDTLYPTSKMKDPPPDNLPMFTGNAYFVASRAFVQHVLDNPKSQRLVEWVKDTYSPDEHLWATLQRAPWMPGSVPSHPKYHISDMTAVARLVKWQYHEGDVSMGAPYAPCSGIHRRAICIYGAGDLYWILQNHHLLANKFDPRVDDNVLQCLEEYLRHKAIYGTEL.

Topologically, residues 1-11 (MVGWKKKKLCR) are cytoplasmic. Residues 12-29 (GHHLWVLGCYMLLAVVSL) form a helical; Signal-anchor for type II membrane protein membrane-spanning segment. Residues 30–439 (RLSLRFKCDV…RHKAIYGTEL (410 aa)) lie on the Lumenal side of the membrane. 2 N-linked (GlcNAc...) asparagine; by host glycosylation sites follow: N71 and N107. 4 disulfide bridges follow: C72–C229, C163–C383, C184–C211, and C392–C424.

It belongs to the glycosyltransferase 14 family.

The protein resides in the host Golgi apparatus membrane. The enzyme catalyses a 3-O-[beta-D-galactosyl-(1-&gt;3)-N-acetyl-alpha-D-galactosaminyl]-L-seryl-[protein] + UDP-N-acetyl-alpha-D-glucosamine = 3-O-{beta-D-galactosyl-(1-&gt;3)-[N-acetyl-beta-D-glucosaminyl-(1-&gt;6)]-N-acetyl-alpha-D-galactosaminyl}-L-seryl-[protein] + UDP + H(+). The catalysed reaction is a 3-O-[beta-D-galactosyl-(1-&gt;3)-N-acetyl-alpha-D-galactosaminyl]-L-threonyl-[protein] + UDP-N-acetyl-alpha-D-glucosamine = a 3-O-{beta-D-galactosyl-(1-&gt;3)-[N-acetyl-beta-D-glucosaminyl-(1-&gt;6)]-N-acetyl-alpha-D-galactosaminyl}-L-threonyl-[protein] + UDP + H(+). It carries out the reaction a beta-D-Gal-(1-&gt;4)-beta-D-GlcNAc-(1-&gt;3)-beta-D-Gal-(1-&gt;4)-beta-D-GlcNAc derivative + UDP-N-acetyl-alpha-D-glucosamine = a beta-D-Gal-(1-&gt;4)-beta-D-GlcNAc-(1-&gt;3)-[beta-D-GlcNAc-(1-&gt;6)]-beta-D-Gal-(1-&gt;4)-N-acetyl-beta-D-glucosaminyl derivative + UDP + H(+). It catalyses the reaction 3-O-[N-acetyl-beta-D-glucosaminyl-(1-&gt;3)-N-acetyl-alpha-D-galactosaminyl]-L-seryl-[protein] + UDP-N-acetyl-alpha-D-glucosamine = 3-O-[N-acetyl-beta-D-glucosaminyl-(1-&gt;3)-[N-acetyl-beta-D-glucosaminyl-(1-&gt;6)]-N-acetyl-alpha-D-galactosaminyl]-L-seryl-[protein] + UDP + H(+). The enzyme catalyses a 3-O-[N-acetyl-beta-D-glucosaminyl-(1-&gt;3)-N-acetyl-alpha-D-galactosaminyl]-L-threonyl-[protein] + UDP-N-acetyl-alpha-D-glucosamine = 3-O-[N-acetyl-beta-D-glucosaminyl-(1-&gt;3)-[N-acetyl-beta-D-glucosaminyl-(1-&gt;6)]-N-acetyl-alpha-D-galactosaminyl]-L-threonyl-[protein] + UDP + H(+). Its pathway is protein modification; protein glycosylation. Non-essential glycosyltransferase that can synthesize all known mucin beta 6 N-acetylglucosaminides. Mediates core 2 and core 4 O-glycan branching, 2 important steps in mucin-type biosynthesis. Has also I-branching enzyme activity by converting linear into branched poly-N-acetyllactosaminoglycans. Contributes to the post-translational modifications of structural proteins. This Bovine herpesvirus 4 (BoHV-4) protein is Beta-1,3-galactosyl-O-glycosyl-glycoprotein beta-1,6-N-acetylglucosaminyltransferase (Bo17).